Reading from the N-terminus, the 190-residue chain is MKNVSPSYLKHHFLIAMPHMADPNFAHTLTYIVEHTANGAMGLVVNRPQELNLADILEQLRPDIDPPALCQHVPIFIGGPVQTDRGFVLHPAGKTFQATVELEGDLALSTSQDVLFAIADGVGPAKSVITLGYAGWEAGQLEAELADNAWLTCPYDADILFNTSSELRLEAAARHLGINLSLLTSQAGHA.

It belongs to the UPF0301 (AlgH) family.

The polypeptide is UPF0301 protein Pfl01_5311 (Pseudomonas fluorescens (strain Pf0-1)).